We begin with the raw amino-acid sequence, 374 residues long: Ribosomal RNA large subunit methyltransferase G (374 aa).

The protein belongs to the methyltransferase superfamily. RlmG family.

The protein localises to the cytoplasm. The enzyme catalyses guanosine(1835) in 23S rRNA + S-adenosyl-L-methionine = N(2)-methylguanosine(1835) in 23S rRNA + S-adenosyl-L-homocysteine + H(+). Its function is as follows. Specifically methylates the guanine in position 1835 (m2G1835) of 23S rRNA. The polypeptide is Ribosomal RNA large subunit methyltransferase G (Pseudomonas aeruginosa (strain UCBPP-PA14)).